The sequence spans 361 residues: Probable S-adenosylmethionine-dependent methyltransferase At5g38780 (361 aa).

Positions 19, 64, 69, 106, 107, 135, and 136 each coordinate S-adenosyl-L-homocysteine. Mg(2+) is bound by residues Asn174, Glu260, Phe262, and Asn263.

This sequence belongs to the methyltransferase superfamily. Type-7 methyltransferase family. Homodimer. Requires Mg(2+) as cofactor.

The sequence is that of Probable S-adenosylmethionine-dependent methyltransferase At5g38780 from Arabidopsis thaliana (Mouse-ear cress).